The primary structure comprises 221 residues: CASP-like protein 4C1 (221 aa).

The tract at residues 1–21 (MDSPESSDRGLNPMTPDHGGH) is disordered. Over 1-54 (MDSPESSDRGLNPMTPDHGGHNGKVVHYFGQGVEGGPASPRKLGHGHLHPKANT) the chain is Cytoplasmic. The helical transmembrane segment at 55 to 75 (ALLLLRLLTFAFSLASLVIMA) threads the bilayer. Over 76–101 (TNSATTTATAGRHRTVNWVDFDTYRY) the chain is Extracellular. A helical membrane pass occupies residues 102 to 122 (VLAACAIVCLYSFAEIGLGLW). The Cytoplasmic segment spans residues 123 to 144 (YLLKGRMVMPESMAHWFDFGHD). The chain crosses the membrane as a helical span at residues 145–165 (QGFAYLIFSACSGATAVAHNL). The Extracellular portion of the chain corresponds to 166 to 189 (RERHILIHGMYGCDEANSFCMKAE). A helical membrane pass occupies residues 190–210 (ISIGLAFGAFLFIALSSLLSG). The Cytoplasmic portion of the chain corresponds to 211–221 (YRLVKWLILGP).

It belongs to the Casparian strip membrane proteins (CASP) family. In terms of assembly, homodimer and heterodimers.

Its subcellular location is the cell membrane. This chain is CASP-like protein 4C1, found in Pteridium aquilinum subsp. aquilinum (Bracken fern).